Here is a 287-residue protein sequence, read N- to C-terminus: Complement C1q-like protein 2 (287 aa).

The first 21 residues, 1-21 (MALGLLIAVPLLLQAAPPGAA), serve as a signal peptide directing secretion. Residues 65-144 (LSANPPPPFI…GTGGGGDTEG (80 aa)) form a disordered region. The Collagen-like domain maps to 76-118 (GPKGDPGRPGKPGPRGPPGEPGPPGPRGPPGEKGDSGRPGLPG). A compositionally biased stretch (pro residues) spans 84–104 (PGKPGPRGPPGEPGPPGPRGP). The span at 127 to 141 (GGVGVVSGGTGGGGD) shows a compositional bias: gly residues. Residues 154–287 (FSGPKIAFYV…TFSGFLLYPD (134 aa)) enclose the C1q domain.

As to quaternary structure, forms homotrimers which can further assemble to form higher-order oligomeric complexes. Interacts with ADGRB3. May interact with ERFE. Forms heterooligomers with C1QL3 and C1QL4, when proteins are coexpressed; this interaction does not occur after secretion. Glycosylated, but not with N-linked glycans. As to expression, highest expression in eye, followed by placenta and brain, intermediate expression in adipose tissue and lowest expression in lymph node and testis.

It localises to the secreted. Its function is as follows. May regulate the number of excitatory synapses that are formed on hippocampus neurons. Has no effect on inhibitory synapses. In Mus musculus (Mouse), this protein is Complement C1q-like protein 2 (C1ql2).